The following is a 389-amino-acid chain: E3 ubiquitin-protein ligase E3D (389 aa).

Ala2 is subject to N-acetylalanine. The BRAT1-like motif motif lies at 129-159 (PLPSENWGALVGEWCCHPDPFANKSLHPQEN). A Zn(2+)-binding site is contributed by Cys144. Positions 235–257 (QSSERSFPIIPRSWFVQSVIAQC) are interaction with UBE2C. Positions 353 to 389 (LPSATCLELLLILSKSNANLPSSLRRVNSFQVAFLKM) are HECT-like.

Interacts with UBE2C/UbcH10 (E2 ubiquitin-conjugating enzyme). In vitro, interacts with cyclin-B. In terms of processing, ubiquitinated by UBCH10 (E2 ubiquitin-conjugating enzyme).

Its subcellular location is the cytoplasm. It carries out the reaction S-ubiquitinyl-[E2 ubiquitin-conjugating enzyme]-L-cysteine + [acceptor protein]-L-lysine = [E2 ubiquitin-conjugating enzyme]-L-cysteine + N(6)-ubiquitinyl-[acceptor protein]-L-lysine.. It participates in protein modification; protein ubiquitination. Its function is as follows. E3 ubiquitin-protein ligase which accepts ubiquitin from specific E2 ubiquitin-conjugating enzymes, and transfers it to substrates, generally promoting their degradation by the proteasome. Independently of its E3 ubiquitin-protein ligase activity, acts as an inhibitor of CPSF3 endonuclease activity by blocking CPSF3 active site. The protein is E3 ubiquitin-protein ligase E3D (UBE3D) of Homo sapiens (Human).